The sequence spans 268 residues: (+)-cis,trans-nepetalactol synthase NEPS2 (268 aa).

NAD(+) contacts are provided by residues 16–22, 41–43, 65–66, Asn92, 163–167, and 196–200; these read GGASGIG, DIQ, DI, YVMSK, and VLTPL.

This sequence belongs to the short-chain dehydrogenases/reductases (SDR) family.

The catalysed reaction is (S)-8-oxocitronellyl enol = cis-trans-nepetalactol. In terms of biological role, functions as a non-oxidoreductive cyclase to promote the formation of cis-trans-nepetalactol. Cis-trans-nepetalactol is then oxidized by NEPS1 into cis-trans-nepetalactone, which belongs to a family of metabolites that are both insect-repellent and have euphoric effect in cats. Binds NAD(+) as classical short-chain dehydrogenase/reductase (SDR), but does not utilize it for its redox-neutral cyclase activity. This is (+)-cis,trans-nepetalactol synthase NEPS2 from Nepeta racemosa (Catmint).